Consider the following 870-residue polypeptide: Rho GTPase-activating protein 7 (870 aa).

Residues threonine 18–alanine 125 enclose the PH domain. Residues leucine 167 to phenylalanine 367 enclose the Rho-GAP domain. Disordered regions lie at residues serine 378–threonine 432 and aspartate 446–arginine 465. A compositionally biased stretch (acidic residues) spans asparagine 407–asparagine 417. Positions glycine 569 to histidine 693 form a coiled coil. The interval histidine 736–isoleucine 793 is disordered. Basic and acidic residues predominate over residues lysine 777–valine 787.

In terms of biological role, acts as a GTPase activator for the Rac-type GTPase by converting it to an inactive GDP-bound state. The sequence is that of Rho GTPase-activating protein 7 (ROPGAP7) from Arabidopsis thaliana (Mouse-ear cress).